A 238-amino-acid chain; its full sequence is 1-(5-phosphoribosyl)-5-[(5-phosphoribosylamino)methylideneamino] imidazole-4-carboxamide isomerase (238 aa).

D8 functions as the Proton acceptor in the catalytic mechanism. D130 serves as the catalytic Proton donor.

Belongs to the HisA/HisF family.

It is found in the cytoplasm. The enzyme catalyses 1-(5-phospho-beta-D-ribosyl)-5-[(5-phospho-beta-D-ribosylamino)methylideneamino]imidazole-4-carboxamide = 5-[(5-phospho-1-deoxy-D-ribulos-1-ylimino)methylamino]-1-(5-phospho-beta-D-ribosyl)imidazole-4-carboxamide. It functions in the pathway amino-acid biosynthesis; L-histidine biosynthesis; L-histidine from 5-phospho-alpha-D-ribose 1-diphosphate: step 4/9. This is 1-(5-phosphoribosyl)-5-[(5-phosphoribosylamino)methylideneamino] imidazole-4-carboxamide isomerase from Methanococcus vannielii (strain ATCC 35089 / DSM 1224 / JCM 13029 / OCM 148 / SB).